Consider the following 533-residue polypeptide: Peptide chain release factor 3 (533 aa).

A tr-type G domain is found at 9-284 (ARRRTFAIIS…ALCELSPPPL (276 aa)). GTP is bound by residues 18-25 (SHPDAGKT), 95-99 (DTPGH), and 149-152 (NKLD).

The protein belongs to the TRAFAC class translation factor GTPase superfamily. Classic translation factor GTPase family. PrfC subfamily.

It is found in the cytoplasm. Increases the formation of ribosomal termination complexes and stimulates activities of RF-1 and RF-2. It binds guanine nucleotides and has strong preference for UGA stop codons. It may interact directly with the ribosome. The stimulation of RF-1 and RF-2 is significantly reduced by GTP and GDP, but not by GMP. The polypeptide is Peptide chain release factor 3 (Cupriavidus taiwanensis (strain DSM 17343 / BCRC 17206 / CCUG 44338 / CIP 107171 / LMG 19424 / R1) (Ralstonia taiwanensis (strain LMG 19424))).